Reading from the N-terminus, the 2979-residue chain is MAGEGAEIAIIGSGCRFPGNASSPSKLWALLQNPTSVASKVPALGGYYHEDALYHGHANVKEAYLLAGEETHRRFDAAFFGIKPSEANVLDPQVRLLLETVYEALEDGGQPMDSLRGSDTAVYAGQMVNDYELLMYRDLENLGRYHATGTSRTMVSNRVSFFFDWHGPSMTIDTACSSSLVALHNAVQQLQSGHSRVAIVAGANLIHDVGSFIAESSLQMLSPNGQSRMWDADADGYARGEGVAAIVLKTREAAEADGDHIECIIRGTAVNQDGKTPGQTMPSASAQAQLIRDCYARAGLDLTNSLHRPQYFEAHGTGTPAGDPIEAEAISSAFFPGASSSLSIFVGSIKTVVGHTEGTAGIAGLLKASLALQNKLIPPNLLFNTLNPRIKPFYDHLHVPTALTPWPSVASGYPRRASVNSFGFGGTNAHAILESYSPPSHPTQVLSTVYIPFVFSAFSEASLKSYLVAFSTYLRENKTTYDLRDIAYSLDARRTRHQVVTTISASTADELCDSIEKKLELSRADPDQRVGVRATHQTAEARKPRVLGVFTGQGAQWAQMGLELITASAVAKSTVESLQKRLDRLPDADRPTWSLVQELERDSSSSHIMEAKFSQPLCTAIQILQINLLRAAGIEFTAVVGHSSGEIAAAYAAGRISAEDAICIAYYRGLYSSLAYGLNGKPGAMMAVGTSPEDAEDLLGFPEFEGRACVAAVNSATSVTISGDQDALEELKVVFEDEHKQARFLKVDKAYHSHHMKECSAKYLESLAALNIQVGSGSQTSWFSSVYEQEVKGRDFLKGPYWDDNMVEPVLFMQAVDNACASTRHFDLAIELGPHPALKGPALQTIQERLSHQIPYTGLFTRGVPAITAFSEGLGYCWTHLGQGVVNLQNYDNFISGNLKCRLVKGLPTYAWDHENEYWHETRYARAVRMRPGPVHDLLGHLTPNSTDQDMRWRQFLRLPEVKWVTGHRLQNLTVFPAAGYIVSVIEAAMSLCKDVSVTLIEIIDVDIDSALVFDNDDVSIEVIISLTGITRRENKAIEADFKYHATSGKDTEPLKLKASGRVRIHLGEACPTVLPPRAQKPPNLVSVSEKKFYDSISELGYQYSGQFASLERIERKLGAATGFISITEASKYLIHPGALDAAFQSTHLTYAAPEDGESRSIYIPRRIKRLTFNPNLCIHARNKQTDLAFDASQPIELPHANKLCDINLYPEHLDHAIIRVQGLECVPFSRQTAKDDREAFSNIVWDVLDPDVEAITKDYHSKTSDSLELAGLLERVAAFYLRSLEKEVPENHPSRYEAPCKGLLQYASNISSQSCATRSQLTQAHWDHDTSEVLTAVCEPYADSIDMKLVFDCGKNLASSVMGESTAGEVSGLMQEWYRSGSGVKNFTAHLAGILKQIVHRYPQMHILEVGPEAGAATNVILTEIGPAFASYTVATSTDILFNPEKALPDIYKAKVLPKELDLSKNPRDQGFTEKSFDVVVASLVLHQSPEFEKCLRNARRLLKPGGHLIVLELRPSLPYFLSVIFSAKSHQWFNAEEGRTSFPAITLLEWDSLLRQTGFSGIDTSTVEQPEIGGPFSIFVSQAMDEKIAFLREPLSTAFPISSPGPTIQDLLILGGNSLKTARLVNQLSAVLKEHCGSLRTARSMGFVDDISPKTIILSLTDLDTNEFKQLDESKWDSLKKIVSHTGTLVWVTHGRLADNPHANMMLGLLRGSARDNSTLDYLLLDIEEAHRIEHSVIAEAILRHRAASQWRESESISYSVESELVMDKAGRFLIPRLMMNEKMNDRYNSNWREIREPARPSLDNIAISASGSGWDVVLEPLPPVRRAQLRTTHSLLSPIRVTGSGCMYISLCSGLLSGDKVIALSSKNNSVVCPQDELSVPVEVPPGSEARFLWLTAHYLLASSILKGLSEEDQVLIHEPSLEFSTAIENEASMLGVEVTFTTKNQDAPDSWMVIHPFSFEQSALARFEDEIFSVFINMAPSQEETESVADIFATALPGHCRKESLRSLFGNKAWTPKGSQIKEIQRRLLRAVSWASGMLTKSHCDGMTSLAIDVLPGTVGQLEPFAVIEWDTVSEVSVKVQPVDTLVSFSDKKTYWLVGLTGGLGLSLCEWMVRRGARYFVISSRQPNIERGWLDGMHKKGVRVEISACDLSKRDQVEGLYAEICSSMPAIGGVAQGAMVLEDVAIQNMTLEQLSRVTKPKVDGSIYLNELFQENTLDFFVFFSSVSSVVGNHGQANYAAANTFMASLAEQRRRKGLAASVMDIGAVFGVGYITRSGNEKLMGKVTLQSGGYVRTSERDFHQLFGEAVLAGKPGSTGPIELVSGVRKVSQREEERPVWETWPRMSHFVMDHEGPEYTTDASNKAHIPVKVRLAEARNNEEAYGIVWEDFVRKLQSLFQIDITSLTKAELGAMRLDQMGIDSLTAVEIRGWLMKTFEVNLPVLKILNGISVGELVDTATEAIPSHLVPNLAGYPAEQTSSQNSDSGQDMASSFDTVVNNPFDSDQVSSFHSDLSSNQEDATATDSKSTVLKSIPVSFTQARFYPSGLFLEDKVGLNHIAWARFTGEVSAERLQRALHSLAEQHEILRTAFFDQAGKQMQHILNTSPVYLEHKQIQNEDEVTELVMSLQKEYVYDVARGETMRVILLSRSATENYFILGVHPLVLDATSFQIYLKWLAFHYTSPNKIHRVKQFAESSEQRHADYAAGKFEAELQFWRNEFSTPIKPLPLLTVAKVNERPKLKAYENIRSSLTIEVDTKTRILDICRRIRATPFHFYLAVLRVLLLQYTAYGDNSEDVTIAVAENGRGYDAEEMDVIGPLYNLVLVRILAQQTTRFEDLLETTRNKTYAALSNSKLPYPMLVEELGLQRIAKDYPFVQVFADYRVGQRTTAEFGEDNKLVMMGFDFNVPYDVFLDTIDEPEGECLHELFLRNDLFGREEADRLARSYKSLVVAFAEHPAMTLGQAALAESECGGKIAQ.

Positions 5 to 435 (GAEIAIIGSG…GTNAHAILES (431 aa)) constitute a Ketosynthase family 3 (KS3) domain. Active-site for beta-ketoacyl synthase activity residues include Cys-176, His-315, and His-355. A malonyl-CoA:ACP transacylase (MAT) domain region spans residues 549 to 864 (VFTGQGAQWA…PYTGLFTRGV (316 aa)). The active-site For malonyltransferase activity is the Ser-643. The interval 936–1070 (HDLLGHLTPN…GRVRIHLGEA (135 aa)) is N-terminal hotdog fold. The dehydratase (DH) domain stretch occupies residues 936–1234 (HDLLGHLTPN…ECVPFSRQTA (299 aa)). One can recognise a PKS/mFAS DH domain in the interval 936–1235 (HDLLGHLTPN…CVPFSRQTAK (300 aa)). His-968 functions as the Proton acceptor; for dehydratase activity in the catalytic mechanism. The segment at 1085-1235 (LVSVSEKKFY…CVPFSRQTAK (151 aa)) is C-terminal hotdog fold. The active-site Proton donor; for dehydratase activity is Asp-1141. The interval 1387–1572 (NFTAHLAGIL…GIDTSTVEQP (186 aa)) is inactive methyltransferase (MT) domain. A ketoreductase (KR)domain region spans residues 2098–2271 (TYWLVGLTGG…AASVMDIGAV (174 aa)). One can recognise a Carrier domain in the interval 2380–2465 (RNNEEAYGIV…ELVDTATEAI (86 aa)). Ser-2425 is modified (O-(pantetheine 4'-phosphoryl)serine). The disordered stretch occupies residues 2476 to 2497 (YPAEQTSSQNSDSGQDMASSFD). Over residues 2479–2497 (EQTSSQNSDSGQDMASSFD) the composition is skewed to polar residues. The condensation stretch occupies residues 2534 to 2970 (KSIPVSFTQA…MTLGQAALAE (437 aa)).

Interacts with TwmE. Pantetheine 4'-phosphate is required as a cofactor.

It carries out the reaction 5-aminopentanoate + 7 malonyl-CoA + acetyl-CoA + 11 NADPH + 17 H(+) = wortmanamide A + 7 CO2 + 11 NADP(+) + 8 CoA + 6 H2O. The enzyme catalyses 5-aminopentanoate + 8 malonyl-CoA + acetyl-CoA + 13 NADPH + 20 H(+) = wortmanamide B + 8 CO2 + 13 NADP(+) + 9 CoA + 7 H2O. It functions in the pathway secondary metabolite biosynthesis. In terms of biological role, polyketide synthase-nonribosomal peptide synthetase; part of the gene cluster that mediates the biosynthesis of wortmanamides A and B, reduced long-chain polyketides amidated with a specific omega-amino acid, 5-aminopentanoic acid (5PA). The PKS modules of TwmB are involved in the synthesis of the polyketide backbone, whereas the non-canonical C domain of TwmB is a bonafide condensation domain that specifically selects 5PA and catalyzes amidation to release polyketide chain. The C domain clearly prefers C16 and C18 fatty acyl substrates, which is consistent with simultaneous formation of both octaketide and nonaketide acyl amides wortmanamides A and B. Because TwmB lacks a designated enoylreductase (ER) domain, the required activity is provided the enoyl reductase TwmE. The roles of the remaining enzymes have still to be clarified. The sequence is that of Polyketide synthase-nonribosomal peptide synthetase TwmB from Talaromyces wortmannii (Penicillium wortmannii).